The primary structure comprises 652 residues: MNWVGGSRSRVLIKQERRKQKEYFERNKLKSKLKLLGVVSPVKKPSVSLDLLNLYVVNQISSMKENSETMKRPTHVNMTRDLKVPLRKHDLELPMSPHCVPSKLCIDDMEDSVPYQRIYSKEETGPVQSSQDMKSYRMFNETGNCSYIPPSFPEELRSNRHIRSQHSTPRIGPSPQQFVYENPHSGQFSNGKFPESLFSKLNKHQHVFSSSQTTAEFEAPYKRTNSSETGDFLTKRSMIMGEDCRSLYERRQPDFAMEKPLVQQIYANNGEEFSNFLEDVIHPTQRHLPDNHNSFVSHSMIDLLSKDQPGRRATFTKCGYDSLSDTHVVSSDESHSSSGLINGEFTVPQATSPNFPFNTSYTETCQPNRPCQEYNSNEINEFRRSFEKDCYSIGCGRKGKIESDKQLKELQRNARKHPVYTMADIPLEELHCKQSCDFDQNEIPMERRGMCPLKGQPMSTEKIYLESSQSSQSASYSPRPTESTFSSSTDLISEDEDQIQQQTEDSNKKATETTGNCCLEKMENHFDDITVKDDATAHKQNHKCLQSSEKNNADAFPESQCNSEHTVQNKSTDNCVLQAGRCDVGVQTEEAPLVGNTADVAVQCTIITRCSCMSSPVLIREKESSHPEAGSCTEDRTADTTGGQETPTSNSL.

Positions 1-228 (MNWVGGSRSR…APYKRTNSSE (228 aa)) form a DNA-binding region, binds DNA containing a D-loop. Disordered stretches follow at residues 464-512 (YLES…KATE) and 621-652 (EKES…SNSL). The span at 467–477 (SSQSSQSASYS) shows a compositional bias: low complexity. Composition is skewed to polar residues over residues 478-491 (PRPT…STDL) and 639-652 (DTTG…SNSL).

In terms of assembly, interacts with MSH5. Interacts with TEX11. As to expression, expressed mainly in testis (at protein level). Expressed in spermatogonia and enriched in spermatocytes; absent in testicular somatic cells (at protein level). No expression or low levels in other tissues.

Its subcellular location is the chromosome. Functionally, involved in recombination, probably acting by stabilizing recombination intermediates during meiotic crossover formation. Required for normal germline development and fertility. Required for meiotic progression, complete chromosomal synapsis and crossover formation. Binds double-stranded DNA. However, also binds branched DNA molecules, such as those containing a D-loop or Holliday junction structure. Probably not required for formation of DNA double-strand breaks (DSBs). Also binds RNA in an RNA structure-independent manner, with a preference for binding 3'-UTR regions of mRNAs; may stabilize bound RNAs. This is Regulator of DNA class I crossover intermediates 1 from Mus musculus (Mouse).